Reading from the N-terminus, the 388-residue chain is Dual-specificity RNA methyltransferase RlmN (388 aa).

E109 serves as the catalytic Proton acceptor. Positions 115-354 (EDDRATLCVS…TIVRKTRGDD (240 aa)) constitute a Radical SAM core domain. The cysteines at positions 122 and 359 are disulfide-linked. C129, C133, and C136 together coordinate [4Fe-4S] cluster. S-adenosyl-L-methionine-binding positions include 183–184 (GE), S215, 237–239 (SLH), and N316. The S-methylcysteine intermediate role is filled by C359.

This sequence belongs to the radical SAM superfamily. RlmN family. It depends on [4Fe-4S] cluster as a cofactor.

Its subcellular location is the cytoplasm. It carries out the reaction adenosine(2503) in 23S rRNA + 2 reduced [2Fe-2S]-[ferredoxin] + 2 S-adenosyl-L-methionine = 2-methyladenosine(2503) in 23S rRNA + 5'-deoxyadenosine + L-methionine + 2 oxidized [2Fe-2S]-[ferredoxin] + S-adenosyl-L-homocysteine. The enzyme catalyses adenosine(37) in tRNA + 2 reduced [2Fe-2S]-[ferredoxin] + 2 S-adenosyl-L-methionine = 2-methyladenosine(37) in tRNA + 5'-deoxyadenosine + L-methionine + 2 oxidized [2Fe-2S]-[ferredoxin] + S-adenosyl-L-homocysteine. Specifically methylates position 2 of adenine 2503 in 23S rRNA and position 2 of adenine 37 in tRNAs. m2A2503 modification seems to play a crucial role in the proofreading step occurring at the peptidyl transferase center and thus would serve to optimize ribosomal fidelity. This chain is Dual-specificity RNA methyltransferase RlmN, found in Citrobacter koseri (strain ATCC BAA-895 / CDC 4225-83 / SGSC4696).